A 160-amino-acid chain; its full sequence is Putative pre-16S rRNA nuclease (160 aa).

It belongs to the YqgF nuclease family.

Its subcellular location is the cytoplasm. Functionally, could be a nuclease involved in processing of the 5'-end of pre-16S rRNA. In Rhodopseudomonas palustris (strain HaA2), this protein is Putative pre-16S rRNA nuclease.